The primary structure comprises 498 residues: ATP synthase subunit beta, chloroplastic (498 aa).

Residue G172–T179 coordinates ATP.

The protein belongs to the ATPase alpha/beta chains family. As to quaternary structure, F-type ATPases have 2 components, CF(1) - the catalytic core - and CF(0) - the membrane proton channel. CF(1) has five subunits: alpha(3), beta(3), gamma(1), delta(1), epsilon(1). CF(0) has four main subunits: a(1), b(1), b'(1) and c(9-12).

The protein localises to the plastid. It localises to the chloroplast thylakoid membrane. The enzyme catalyses ATP + H2O + 4 H(+)(in) = ADP + phosphate + 5 H(+)(out). Functionally, produces ATP from ADP in the presence of a proton gradient across the membrane. The catalytic sites are hosted primarily by the beta subunits. In Trochodendron aralioides (Wheel tree), this protein is ATP synthase subunit beta, chloroplastic.